We begin with the raw amino-acid sequence, 239 residues long: Transcriptional activatory protein AadR (239 aa).

A nucleoside 3',5'-cyclic phosphate is bound at residue 27-149 (ICGELGPADH…FATRELSLAQ (123 aa)). In terms of domain architecture, HTH crp-type spans 158-231 (RSAEEKVAAF…PDGVRVLDPK (74 aa)). The H-T-H motif DNA-binding region spans 191–210 (RQDIADFLGLTIETVSRTFT).

Its function is as follows. Transcriptional activator of anaerobic gene expression. For aromatic acid degradation. Also required for the anaerobic degradation of benzoate. In Rhodopseudomonas palustris (strain ATCC BAA-98 / CGA009), this protein is Transcriptional activatory protein AadR (aadR).